Here is a 348-residue protein sequence, read N- to C-terminus: N6-Methyl-AMP deaminase (348 aa).

Zn(2+) contacts are provided by H18 and H20. N(6)-methyl-AMP-binding positions include H20, N22, H68, 100–103 (STPR), D142, and G175. Zn(2+) is bound at residue H202. Positions 205, 287, and 288 each coordinate N(6)-methyl-AMP. E205 serves as the catalytic Proton donor. D287 is a binding site for Zn(2+).

It belongs to the metallo-dependent hydrolases superfamily. Adenosine and AMP deaminases family. In terms of assembly, monomer. Zn(2+) serves as cofactor.

It carries out the reaction N(6)-methyl-AMP + H2O + H(+) = IMP + methylamine. In terms of biological role, catalyzes the hydrolysis of the free cytosolic methylated adenosine nucleotide N(6)-methyl-AMP (N6-mAMP) to produce inositol monophosphate (IMP) and methylamine. Is required for the catabolism of cytosolic N6-mAMP, which is derived from the degradation of mRNA containing N6-methylated adenine (m6A). This Danio rerio (Zebrafish) protein is N6-Methyl-AMP deaminase (mapda).